The primary structure comprises 193 residues: p53 apoptosis effector related to PMP-22 (193 aa).

4 helical membrane-spanning segments follow: residues 12 to 32, 81 to 101, 110 to 130, and 151 to 171; these read RWILPLLLLSAIAFDIIALAG, LFCGFIILCICFILSFFALCG, VIGGLLALAAIFQIISLVIYP, and WAYGFGWAATIILIGCSFFFC.

This sequence belongs to the TMEM47 family. In terms of tissue distribution, expressed in the stratified squamous skin epithelium of the skin and the tongue, but not in simple epithelia (at protein level). Expressed in the oral epithelium, tongue epithelium and skin (at protein level). More abundant in areas of lower flow stress in the inner curvature compared to the outer curvature regions of the aorta (at protein level). Expressed in luminal cells and myoepithelium cells of the mammary epithelium (at protein level). Expression increases during the early stages of pregnancy before decreasing before birth, expression continues to be weak during involution which mirrors decreased desmosome abundance and organization at these time points (at protein level). Expressed by epithelial cells at the mucosal surface in the proximal colon (at protein level). Expressed in apoptotic cells.

The protein resides in the cell junction. The protein localises to the desmosome. Its subcellular location is the cell membrane. It localises to the cytoplasm. In terms of biological role, component of intercellular desmosome junctions. Plays a role in stratified epithelial integrity and cell-cell adhesion by promoting desmosome assembly. Thereby plays a role in barrier function of the skin against infection. Plays a role in mammary epithelial tissue homeostasis and remodeling during and after pregnancy, potentially via its involvement in desmosome cell-cell junctions. Required for tooth enamel development via facilitating desmosome-mediated ameloblast adhesion to the stratum intermedium during the transitional stage of amelogenesis. May also play a role in downstream transcriptional regulation of other genes involved in amelogenesis such as AMBN, ENAM, MMP20 and KLK4. Plays a role as an effector in the TP53-dependent apoptotic pathway. Positively regulates apoptosis in T-helper 17 (Th17) cell populations via caspase-dependent signaling. Promotes neutrophil transepithelial migration in response to chemoattractants such as hepoxilin A3 (HXA3), N-Formylmethionyl-leucyl-phenylalanine (fMLP) and CXCL8/IL-8. May act as a positive regulator of endothelial cell apoptosis in response to blood flow-derived shear stress. This is p53 apoptosis effector related to PMP-22 from Mus musculus (Mouse).